We begin with the raw amino-acid sequence, 481 residues long: Argininosuccinate lyase (481 aa).

The protein belongs to the lyase 1 family. Argininosuccinate lyase subfamily.

The protein resides in the cytoplasm. The catalysed reaction is 2-(N(omega)-L-arginino)succinate = fumarate + L-arginine. The protein operates within amino-acid biosynthesis; L-arginine biosynthesis; L-arginine from L-ornithine and carbamoyl phosphate: step 3/3. The polypeptide is Argininosuccinate lyase (Methanococcus maripaludis (strain DSM 14266 / JCM 13030 / NBRC 101832 / S2 / LL)).